We begin with the raw amino-acid sequence, 274 residues long: Cytochrome b-c1 complex subunit Rieske, mitochondrial (274 aa).

Over 79–103 (SHTDIKVPDFSEYRRLEVLDSTKSS) the chain is Mitochondrial matrix. Residues 104 to 140 (RESSEARKGFSYLVTGVTTVGVAYAAKNAVTQFVSSM) traverse the membrane as a helical segment. The Mitochondrial intermembrane portion of the chain corresponds to 141 to 274 (SASADVLALA…FTSDDMVIVG (134 aa)). Positions 187–272 (EAAVELSQLR…YEFTSDDMVI (86 aa)) constitute a Rieske domain. Positions 217, 219, 236, 239, and 241 each coordinate [2Fe-2S] cluster. A disulfide bridge connects residues Cys-222 and Cys-238.

This sequence belongs to the Rieske iron-sulfur protein family. Component of the ubiquinol-cytochrome c oxidoreductase (cytochrome b-c1 complex, complex III, CIII), a multisubunit enzyme composed of 11 subunits. The complex is composed of 3 respiratory subunits cytochrome b, cytochrome c1 and Rieske protein UQCRFS1, 2 core protein subunits UQCRC1/QCR1 and UQCRC2/QCR2, and 6 low-molecular weight protein subunits UQCRH/QCR6, UQCRB/QCR7, UQCRQ/QCR8, UQCR10/QCR9, UQCR11/QCR10 and subunit 9, the cleavage product of Rieske protein UQCRFS1. The complex exists as an obligatory dimer and forms supercomplexes (SCs) in the inner mitochondrial membrane with NADH-ubiquinone oxidoreductase (complex I, CI) and cytochrome c oxidase (complex IV, CIV), resulting in different assemblies (supercomplex SCI(1)III(2)IV(1) and megacomplex MCI(2)III(2)IV(2)). Incorporation of the Rieske protein UQCRFS1 is the penultimate step in complex III assembly. Interacts with TTC19, which is involved in the clearance of UQCRFS1 fragments. As to quaternary structure, component of the ubiquinol-cytochrome c oxidoreductase (cytochrome b-c1 complex, complex III, CIII). Subunit 9 corresponds to the mitochondrial targeting sequence (MTS) of Rieske protein UQCRFS1. It is retained after processing and incorporated inside complex III, where it remains bound to the complex and localizes between the 2 core subunits UQCRC1/QCR1 and UQCRC2/QCR2. The cofactor is [2Fe-2S] cluster. Post-translationally, proteolytic processing is necessary for the correct insertion of UQCRFS1 in the complex III dimer. Several fragments are generated during UQCRFS1 insertion, most probably due to the endogenous matrix-processing peptidase (MPP) activity of the 2 core protein subunits UQCRC1/QCR1 and UQCRC2/QCR2, which are homologous to the 2 mitochondrial-processing peptidase (MPP) subunits beta-MPP and alpha-MPP respectively. The action of the protease is also necessary for the clearance of the UQCRFS1 fragments.

It localises to the mitochondrion inner membrane. The catalysed reaction is a quinol + 2 Fe(III)-[cytochrome c](out) = a quinone + 2 Fe(II)-[cytochrome c](out) + 2 H(+)(out). Its function is as follows. Component of the ubiquinol-cytochrome c oxidoreductase, a multisubunit transmembrane complex that is part of the mitochondrial electron transport chain which drives oxidative phosphorylation. The respiratory chain contains 3 multisubunit complexes succinate dehydrogenase (complex II, CII), ubiquinol-cytochrome c oxidoreductase (cytochrome b-c1 complex, complex III, CIII) and cytochrome c oxidase (complex IV, CIV), that cooperate to transfer electrons derived from NADH and succinate to molecular oxygen, creating an electrochemical gradient over the inner membrane that drives transmembrane transport and the ATP synthase. The cytochrome b-c1 complex catalyzes electron transfer from ubiquinol to cytochrome c, linking this redox reaction to translocation of protons across the mitochondrial inner membrane, with protons being carried across the membrane as hydrogens on the quinol. In the process called Q cycle, 2 protons are consumed from the matrix, 4 protons are released into the intermembrane space and 2 electrons are passed to cytochrome c. The Rieske protein is a catalytic core subunit containing a [2Fe-2S] iron-sulfur cluster. It cycles between 2 conformational states during catalysis to transfer electrons from the quinol bound in the Q(0) site in cytochrome b to cytochrome c1. Incorporation of UQCRFS1 is the penultimate step in complex III assembly. In terms of biological role, component of the ubiquinol-cytochrome c oxidoreductase (cytochrome b-c1 complex, complex III, CIII). UQCRFS1 undergoes proteolytic processing once it is incorporated in the complex III dimer. One of the fragments, called subunit 9, corresponds to its mitochondrial targeting sequence (MTS). The proteolytic processing is necessary for the correct insertion of UQCRFS1 in the complex III dimer, but the persistence of UQCRFS1-derived fragments may prevent newly imported UQCRFS1 to be processed and assembled into complex III and is detrimental for the complex III structure and function. In Gorilla gorilla gorilla (Western lowland gorilla), this protein is Cytochrome b-c1 complex subunit Rieske, mitochondrial (UQCRFS1).